The primary structure comprises 198 residues: V-type ATP synthase subunit E (198 aa).

This sequence belongs to the V-ATPase E subunit family.

In terms of biological role, produces ATP from ADP in the presence of a proton gradient across the membrane. In Clostridium perfringens (strain SM101 / Type A), this protein is V-type ATP synthase subunit E.